Reading from the N-terminus, the 233-residue chain is PEP2-like protein NECHADRAFT_97050 (233 aa).

Belongs to the PEP2 family.

May contribute to the ability of the fungus to cause disease on pea plants. This is PEP2-like protein NECHADRAFT_97050 from Fusarium vanettenii (strain ATCC MYA-4622 / CBS 123669 / FGSC 9596 / NRRL 45880 / 77-13-4) (Fusarium solani subsp. pisi).